The following is a 725-amino-acid chain: Ribonuclease Y (725 aa).

A helical transmembrane segment spans residues 4-24; that stretch reads VLVILLSLVLLVLVALILAVA. Disordered regions lie at residues 62-140, 165-195, and 300-321; these read DGPA…ASDT, VAATEDTSLEAPLRESALRESAPGESASVRR, and EQRVEERTAGLDEHASRLAGRE. Low complexity-rich tracts occupy residues 84–100 and 114–137; these read DAPGAAYGESAAAPDAG and AAAPEPGAAIGGAPTPAAGSPADA. One can recognise a KH domain in the interval 415–481; that stretch reads VVTVLHLPGD…RITLAALVSD (67 aa). The region spanning 541-634 is the HD domain; it reads VLAHLIESAH…TQAADQISGG (94 aa).

This sequence belongs to the RNase Y family.

It is found in the cell membrane. Its function is as follows. Endoribonuclease that initiates mRNA decay. This chain is Ribonuclease Y, found in Frankia alni (strain DSM 45986 / CECT 9034 / ACN14a).